The following is a 100-amino-acid chain: Small ribosomal subunit protein uS14c (100 aa).

This sequence belongs to the universal ribosomal protein uS14 family. Part of the 30S ribosomal subunit.

It is found in the plastid. The protein resides in the chloroplast. Binds 16S rRNA, required for the assembly of 30S particles. The polypeptide is Small ribosomal subunit protein uS14c (Platanus occidentalis (Sycamore)).